The primary structure comprises 36 residues: Pancreatic polypeptide (36 aa).

Phenylalanine amide is present on Phe36.

It belongs to the NPY family.

It localises to the secreted. Functionally, hormone secreted by pancreatic cells that acts as a regulator of pancreatic and gastrointestinal functions. The sequence is that of Pancreatic polypeptide (ppy) from Rana temporaria (European common frog).